Here is a 160-residue protein sequence, read N- to C-terminus: Putative NrdI-like protein (160 aa).

It belongs to the NrdI family.

This Streptococcus pyogenes serotype M1 protein is Putative NrdI-like protein.